A 610-amino-acid polypeptide reads, in one-letter code: UvrABC system protein C (610 aa).

In terms of domain architecture, GIY-YIG spans Asn-16–Val-94. In terms of domain architecture, UVR spans Ser-204–Val-239.

The protein belongs to the UvrC family. In terms of assembly, interacts with UvrB in an incision complex.

Its subcellular location is the cytoplasm. The UvrABC repair system catalyzes the recognition and processing of DNA lesions. UvrC both incises the 5' and 3' sides of the lesion. The N-terminal half is responsible for the 3' incision and the C-terminal half is responsible for the 5' incision. This is UvrABC system protein C from Edwardsiella ictaluri (strain 93-146).